We begin with the raw amino-acid sequence, 292 residues long: Putative FNIP repeat-containing protein L281 (292 aa).

Residues 95–134 (FNKSIDDIPSTITHLSLGAAFNGEVSNIPTSVTHLKLGVS) form an FNIP repeat.

This is Putative FNIP repeat-containing protein L281 from Acanthamoeba polyphaga mimivirus (APMV).